We begin with the raw amino-acid sequence, 153 residues long: Large ribosomal subunit protein uL30 (153 aa).

Belongs to the universal ribosomal protein uL30 family. Part of the 50S ribosomal subunit.

The sequence is that of Large ribosomal subunit protein uL30 from Methanosarcina acetivorans (strain ATCC 35395 / DSM 2834 / JCM 12185 / C2A).